Here is a 367-residue protein sequence, read N- to C-terminus: uncharacterized protein (367 aa).

4 consecutive transmembrane segments (helical) span residues Ile18–Gly38, Val239–Gly259, Ile296–Ile316, and Ala329–Leu349.

It belongs to the ABC-4 integral membrane protein family.

It localises to the cell membrane. This is an uncharacterized protein from Methanocaldococcus jannaschii (strain ATCC 43067 / DSM 2661 / JAL-1 / JCM 10045 / NBRC 100440) (Methanococcus jannaschii).